The chain runs to 439 residues: SH3 domain-containing protein 1 (439 aa).

Positions 32 to 263 (DAVVVDEEEL…MIAEEEAIGS (232 aa)) constitute a BAR domain. Residues 277–291 (SLPQQEPNSNSSGEI) show a composition bias toward polar residues. Positions 277-362 (SLPQQEPNSN…SDDHHNHQLL (86 aa)) are disordered. A compositionally biased stretch (basic and acidic residues) spans 318–358 (SPKDEMKSSPQEETKSNHQKEIKSSPQEEIKKSNGSDDHHN). The SH3 domain maps to 366–425 (DSYFLAKVVHPFDAQAPGELSLAVDDYVIVRQVAGTGWSEGEYKGKAGWFPSAYVEKQEK).

In terms of assembly, interacts with the auxilin-like protein AUXI1. As to expression, highly expressed in flowers. Detected in seedlings, roots, leaves and stems.

It is found in the cytoplasmic vesicle. Its subcellular location is the clathrin-coated vesicle. It localises to the cell membrane. The protein resides in the golgi apparatus. The protein localises to the trans-Golgi network. It is found in the endoplasmic reticulum. Functionally, lipid binding protein bound strongly to phosphatidic acid, phosphatidylinositol-4-phosphate and phosphatidylinositol-4,5-bisphosphate. Binds actin in vitro. Involved in trafficking and modification of clathrin-coated vesicles. In Arabidopsis thaliana (Mouse-ear cress), this protein is SH3 domain-containing protein 1 (SH3P1).